The sequence spans 552 residues: CTP synthase (552 aa).

The interval M1–L270 is amidoligase domain. A CTP-binding site is contributed by S13. UTP is bound at residue S13. ATP-binding positions include S14–I19 and D71. Residues D71 and E144 each contribute to the Mg(2+) site. CTP is bound by residues D151–E153, K191–Q196, and K227. UTP is bound by residues K191–Q196 and K227. Residues Q295–P548 form the Glutamine amidotransferase type-1 domain. G357 lines the L-glutamine pocket. The active-site Nucleophile; for glutamine hydrolysis is C384. Residues L385–Q388, E408, and R474 each bind L-glutamine. Active-site residues include H521 and E523.

Belongs to the CTP synthase family. As to quaternary structure, homotetramer.

The enzyme catalyses UTP + L-glutamine + ATP + H2O = CTP + L-glutamate + ADP + phosphate + 2 H(+). It catalyses the reaction L-glutamine + H2O = L-glutamate + NH4(+). The catalysed reaction is UTP + NH4(+) + ATP = CTP + ADP + phosphate + 2 H(+). The protein operates within pyrimidine metabolism; CTP biosynthesis via de novo pathway; CTP from UDP: step 2/2. With respect to regulation, allosterically activated by GTP, when glutamine is the substrate; GTP has no effect on the reaction when ammonia is the substrate. The allosteric effector GTP functions by stabilizing the protein conformation that binds the tetrahedral intermediate(s) formed during glutamine hydrolysis. Inhibited by the product CTP, via allosteric rather than competitive inhibition. Functionally, catalyzes the ATP-dependent amination of UTP to CTP with either L-glutamine or ammonia as the source of nitrogen. Regulates intracellular CTP levels through interactions with the four ribonucleotide triphosphates. This chain is CTP synthase, found in Acidovorax ebreus (strain TPSY) (Diaphorobacter sp. (strain TPSY)).